A 2121-amino-acid chain; its full sequence is PAM2 domain-containing protein UPA2 (2121 aa).

A PAM2 1 motif is present at residues 1-17 (MEGSSLNVAAPVFKPSG). 6 disordered regions span residues 14–46 (KPSG…AVHA), 262–302 (QPED…SALT), 375–397 (AATT…PPST), 475–507 (ARRR…SSGG), 522–543 (ANSD…QKPL), and 586–819 (DLGR…QFSR). An effector domain region spans residues 339–599 (PWPYSLGLPD…GFGYEPQSPN (261 aa)). A compositionally biased stretch (polar residues) spans 596–607 (QSPNAAPNGTTS). 2 stretches are compositionally biased toward acidic residues: residues 626–637 (EENDELGFDGEE) and 646–658 (EDAD…EEPN). Positions 679-689 (DGHDRYADDNQ) are enriched in basic and acidic residues. A compositionally biased stretch (polar residues) spans 690-712 (SHASNDDSLQDSLTPSDEQFSNP). The segment covering 719–735 (REERILRRQHRAAERAA) has biased composition (basic and acidic residues). Basic residues predominate over residues 736 to 745 (RRERKQRQRG). Composition is skewed to polar residues over residues 749 to 758 (SDNTLPSSSI) and 777 to 788 (NPRNGNTISNPS). 2 short sequence motifs (PAM2) span residues 858–874 (SGIS…KFGG) and 920–937 (TNAA…PGLF). Residues 950-960 (NSLSASPSIAV) are compositionally biased toward polar residues. Residues 950–1012 (NSLSASPSIA…PSPPRPKASA (63 aa)) form a disordered region. A compositionally biased stretch (basic and acidic residues) spans 966-981 (GADHRETENRDMQGRE). The PAM2 4 signature appears at 1046–1063 (SHESRLTADAPSFVPTWA). Disordered stretches follow at residues 1076-1096 (KRPS…KDLP), 1119-1261 (SKDD…EEES), and 1337-1369 (SHAR…NSSL). The segment covering 1198–1207 (HSPSISQTSD) has biased composition (polar residues). A compositionally biased stretch (acidic residues) spans 1248 to 1261 (GGNDEDDYEDEEES). Positions 1345–1369 (ETQSTIRPLRQRNSSSDVKTANSSL) are enriched in polar residues. Residues 1783–2054 (LEKQAQANAD…EAKLQTLTAS (272 aa)) are a coiled coil. The interval 2099–2121 (SFASTAGSQGKKEVEVDEGGWWS) is disordered. Residues 2118-2120 (GWW) carry the GWW motif.

It belongs to the UPA1 PAM2 domain-binding protein family. In terms of assembly, might form homodimers via its C-terminal coiled-coil domain. Part of large ribonucleoprotein complexes (mRNPs) containing RNA-binding proteins RRM4 and PAB1, endosome-binding protein UPA1, core scaffold protein UPA2 and associated factor GRP1. Interacts (via PAM2 motifs) with PAB1.

The protein resides in the cytoplasm. Its subcellular location is the cytoskeleton. It is found in the endosome. Its function is as follows. Core component of endosomal mRNA transport and appears to carry out crucial scaffolding functions. The endosomal mRNA transport regulates polarity of the infectious hyphae by transporting a broad spectrum of cargo mRNAs from the nucleus to cell poles. The protein is PAM2 domain-containing protein UPA2 of Mycosarcoma maydis (Corn smut fungus).